We begin with the raw amino-acid sequence, 344 residues long: Ferredoxin--NADP reductase (344 aa).

Residues Ser12, Asp31, Lys39, Tyr43, Val83, Ile118, Asp285, and Ser326 each coordinate FAD.

This sequence belongs to the ferredoxin--NADP reductase type 2 family. In terms of assembly, homodimer. FAD serves as cofactor.

It catalyses the reaction 2 reduced [2Fe-2S]-[ferredoxin] + NADP(+) + H(+) = 2 oxidized [2Fe-2S]-[ferredoxin] + NADPH. The protein is Ferredoxin--NADP reductase of Staphylococcus aureus (strain JH1).